Reading from the N-terminus, the 513-residue chain is GMP synthase [glutamine-hydrolyzing] (513 aa).

The 198-residue stretch at 3–200 folds into the Glutamine amidotransferase type-1 domain; sequence SVLVLDFGSQ…LINIAGIRPD (198 aa). Cys-80 serves as the catalytic Nucleophile. Catalysis depends on residues His-174 and Glu-176. Positions 201 to 388 constitute a GMPS ATP-PPase domain; that stretch reads WSSKSFIEHQ…LGIPEDILMR (188 aa). 228-234 contributes to the ATP binding site; sequence SGGVDST.

In terms of assembly, homodimer.

The enzyme catalyses XMP + L-glutamine + ATP + H2O = GMP + L-glutamate + AMP + diphosphate + 2 H(+). The protein operates within purine metabolism; GMP biosynthesis; GMP from XMP (L-Gln route): step 1/1. Catalyzes the synthesis of GMP from XMP. The polypeptide is GMP synthase [glutamine-hydrolyzing] (Chlorobium luteolum (strain DSM 273 / BCRC 81028 / 2530) (Pelodictyon luteolum)).